We begin with the raw amino-acid sequence, 836 residues long: Periostin (836 aa).

Residues 1–21 (MIPFLPMFSLLLLLIVNPINA) form the signal peptide. An EMI domain is found at 40–94 (GPNVCALQQILGTKKKYFSTCKNWYKKSICGQKTTVLYECCPGYMRMEGMKGCPA). 5 disulfides stabilise this stretch: cysteine 44–cysteine 80, cysteine 69–cysteine 333, cysteine 79–cysteine 92, cysteine 208–cysteine 311, and cysteine 467–cysteine 472. Cysteine 60 bears the S-cysteinyl cysteine mark. 4 consecutive FAS1 domains span residues 97 to 230 (PIDH…DRVL), 234 to 365 (GTSI…DQVL), 368 to 492 (DSAK…REII), and 496 to 628 (EKSL…DKLL). N-linked (GlcNAc...) asparagine glycosylation occurs at asparagine 599.

In terms of assembly, homodimer. Interacts with BMP1 and fibronectin. In terms of processing, gamma-carboxylation is controversial. Gamma-carboxyglutamated; gamma-carboxyglutamate residues are formed by vitamin K dependent carboxylation; this may be required for calcium binding. According to a more recent report, does not contain vitamin K-dependent gamma-carboxyglutamate residues. As to expression, widely expressed with highest levels in aorta, stomach, lower gastrointestinal tract, placenta, uterus, thyroid tissue and breast. Expressed in the kidney. Expressed in the lung. Up-regulated in epithelial ovarian tumors. Not expressed in normal ovaries. Also highly expressed at the tumor periphery of lung carcinoma tissue but not within the tumor. Overexpressed in breast cancers.

Its subcellular location is the golgi apparatus. It is found in the secreted. The protein localises to the extracellular space. It localises to the extracellular matrix. In terms of biological role, induces cell attachment and spreading and plays a role in cell adhesion. Enhances incorporation of BMP1 in the fibronectin matrix of connective tissues, and subsequent proteolytic activation of lysyl oxidase LOX. This is Periostin (POSTN) from Homo sapiens (Human).